The following is a 496-amino-acid chain: L-arabinose isomerase (496 aa).

Mn(2+) is bound by residues Glu-302, Glu-329, His-346, and His-445.

This sequence belongs to the arabinose isomerase family. Mn(2+) is required as a cofactor.

It carries out the reaction beta-L-arabinopyranose = L-ribulose. Its pathway is carbohydrate degradation; L-arabinose degradation via L-ribulose; D-xylulose 5-phosphate from L-arabinose (bacterial route): step 1/3. In terms of biological role, catalyzes the conversion of L-arabinose to L-ribulose. The polypeptide is L-arabinose isomerase (Thermotoga sp. (strain RQ2)).